The sequence spans 236 residues: H2HPP isomerase (236 aa).

Cupin type-1 domains lie at 40–106 (YVPP…AIDI) and 151–215 (NIPG…SKSV). 8 residues coordinate a divalent metal cation: His-50, His-52, Gln-56, His-91, His-162, His-164, Gln-168, and His-202. Tyr-223 serves as a coordination point for substrate.

As to quaternary structure, monomer. The cofactor is Fe(2+). It depends on Co(2+) as a cofactor.

It localises to the cytoplasm. The catalysed reaction is 3-[(4R)-4-hydroxycyclohexa-1,5-dien-1-yl]-2-oxopropanoate = 3-[(1E,4R)-4-hydroxycyclohex-2-en-1-ylidene]pyruvate. It participates in antibiotic biosynthesis; bacilysin biosynthesis. Functionally, part of the bacABCDEF operon responsible for the biosynthesis of the nonribosomally synthesized dipeptide antibiotic bacilysin, composed of L-alanine and L-anticapsin. Bacilysin is an irreversible inactivator of the glutaminase domain of glucosamine synthetase. BacB catalyzes the allylic isomerization of the endocyclic-delta(4),delta(8)-7R-dihydro-hydroxyphenylpyruvate (en-H2HPP) to generate a mixture of 3E,7R- and 3Z, 7R-olefins of the exocyclic-delta(3),delta(5)-dihydro-hydroxyphenylpyruvate (ex-H2HPP). This Bacillus subtilis protein is H2HPP isomerase.